We begin with the raw amino-acid sequence, 729 residues long: Glycine--tRNA ligase (729 aa).

The transit peptide at 1–33 directs the protein to the mitochondrion; it reads MPCLLPSLLRATRAALPLLSPPRVVAASASQRL. The WHEP-TRS domain maps to 53–109; that stretch reads LLAPLRLAVRQQGDFVRKLKEDKAPQVDVDRAVAELKARKRVLEAKELALQPKDDIV. Lys-194 is subject to N6-acetyllysine. A glycine-binding site is contributed by Glu-289. Residues 321-323 and 332-333 each bind ATP; these read RNE and RV. A glycine-binding site is contributed by Glu-340. Tyr-443 is subject to Phosphotyrosine. 447–448 serves as a coordination point for ATP; the sequence is EI. An N6-acetyllysine modification is found at Lys-491. Residue 566–568 coordinates glycine; it reads EPS. Arg-573 contacts ATP. Residue Ser-690 is modified to Phosphoserine. Thr-726 carries the phosphothreonine modification.

Belongs to the class-II aminoacyl-tRNA synthetase family. In terms of assembly, homodimer.

Its subcellular location is the cytoplasm. It is found in the mitochondrion. It localises to the cell projection. The protein resides in the axon. The protein localises to the secreted. Its subcellular location is the extracellular exosome. It catalyses the reaction tRNA(Gly) + glycine + ATP = glycyl-tRNA(Gly) + AMP + diphosphate. It carries out the reaction 2 ATP + H(+) = P(1),P(4)-bis(5'-adenosyl) tetraphosphate + diphosphate. Functionally, catalyzes the ATP-dependent ligation of glycine to the 3'-end of its cognate tRNA, via the formation of an aminoacyl-adenylate intermediate (Gly-AMP). Also produces diadenosine tetraphosphate (Ap4A), a universal pleiotropic signaling molecule needed for cell regulation pathways, by direct condensation of 2 ATPs. Thereby, may play a special role in Ap4A homeostasis. This is Glycine--tRNA ligase (Gars1) from Mus musculus (Mouse).